A 725-amino-acid polypeptide reads, in one-letter code: Rab-like protein 6 (725 aa).

The residue at position 1 (Met-1) is an N-acetylmethionine. The segment at 39-279 (GVQYNMKIVI…IFLEMMEARS (241 aa)) is small GTPase-like. GTP contacts are provided by residues 50-57 (GDRNTGKT), 100-104 (DVVDK), and 177-179 (YRD). Disordered stretches follow at residues 281–364 (GHAS…PAPA) and 378–725 (PAAE…YEEL). 2 stretches are compositionally biased toward low complexity: residues 291–325 (QSPS…QLSL) and 343–353 (AMPSSVHSSAP). Residues 410–427 (GLDRSFLEDTSVPKDKKV) are compositionally biased toward basic and acidic residues. Phosphoserine occurs at positions 414, 436, 438, 480, 482, 483, and 502. Positions 499–514 (QQCSEPETKWSSTKVS) are enriched in polar residues. Residues 537 to 549 (DSERPQEGKDKQV) are compositionally biased toward basic and acidic residues. Over residues 569-578 (DDPDFESDES) the composition is skewed to acidic residues. 2 positions are modified to phosphoserine: Ser-575 and Ser-594. Residue Thr-597 is modified to Phosphothreonine. Over residues 632 to 649 (MGPKESSDEDRDSKLPSK) the composition is skewed to basic and acidic residues. Phosphoserine occurs at positions 637, 638, and 644. The tract at residues 652–690 (KKKKKKSKEEEEKTTKKKSKHKKSKDKEEGKEDRKKKRK) is interaction with CDKN2A. The span at 666-675 (TKKKSKHKKS) shows a compositional bias: basic residues. The segment covering 707–725 (LGGGAPGSRHPGGGDYEEL) has biased composition (gly residues).

This sequence belongs to the small GTPase superfamily. Rab family.

Its subcellular location is the nucleus. The protein resides in the cytoplasm. Functionally, may enhance cellular proliferation. May reduce growth inhibitory activity of CDKN2A. The chain is Rab-like protein 6 (Rabl6) from Mus musculus (Mouse).